A 767-amino-acid polypeptide reads, in one-letter code: Syn-copalyl diphosphate synthase, chloroplastic (767 aa).

A chloroplast-targeting transit peptide spans 1-47 (MPVFTASFQCVTLFGQPASAADAQPLLQGQRPFLHLHARRRRPCGPM). Residues 45-74 (GPMLISKSPPYPASEETREWEADGQHEHTD) are disordered. Basic and acidic residues predominate over residues 59 to 74 (EETREWEADGQHEHTD). Residue Lys-233 coordinates substrate. Asp-365 and Asp-367 together coordinate Mg(2+). Residues 365-368 (DIDD) carry the DXDD motif motif. Lys-453 serves as a coordination point for substrate.

Belongs to the terpene synthase family. Mg(2+) is required as a cofactor.

Its subcellular location is the plastid. It is found in the chloroplast. The catalysed reaction is (2E,6E,10E)-geranylgeranyl diphosphate = 9alpha-copalyl diphosphate. Functionally, catalyzes the conversion of geranylgeranyl diphosphate to the phytoalexin precursor syn-copalyl diphosphate. Required for the biosynthesis of momilactones that exude from roots and act as allelochemicals against lowland weeds in paddy soil. The protein is Syn-copalyl diphosphate synthase, chloroplastic of Oryza sativa subsp. japonica (Rice).